A 432-amino-acid chain; its full sequence is Gamma-glutamyl phosphate reductase (432 aa).

Belongs to the gamma-glutamyl phosphate reductase family.

The protein localises to the cytoplasm. The catalysed reaction is L-glutamate 5-semialdehyde + phosphate + NADP(+) = L-glutamyl 5-phosphate + NADPH + H(+). The protein operates within amino-acid biosynthesis; L-proline biosynthesis; L-glutamate 5-semialdehyde from L-glutamate: step 2/2. Catalyzes the NADPH-dependent reduction of L-glutamate 5-phosphate into L-glutamate 5-semialdehyde and phosphate. The product spontaneously undergoes cyclization to form 1-pyrroline-5-carboxylate. The chain is Gamma-glutamyl phosphate reductase from Psychrobacter sp. (strain PRwf-1).